The chain runs to 139 residues: Phosphoribosyl-AMP cyclohydrolase (139 aa).

Aspartate 95 contacts Mg(2+). Cysteine 96 contacts Zn(2+). Residues aspartate 97 and aspartate 99 each contribute to the Mg(2+) site. 2 residues coordinate Zn(2+): cysteine 114 and cysteine 121.

This sequence belongs to the PRA-CH family. Homodimer. Mg(2+) serves as cofactor. Zn(2+) is required as a cofactor.

The protein localises to the cytoplasm. It carries out the reaction 1-(5-phospho-beta-D-ribosyl)-5'-AMP + H2O = 1-(5-phospho-beta-D-ribosyl)-5-[(5-phospho-beta-D-ribosylamino)methylideneamino]imidazole-4-carboxamide. Its pathway is amino-acid biosynthesis; L-histidine biosynthesis; L-histidine from 5-phospho-alpha-D-ribose 1-diphosphate: step 3/9. Its function is as follows. Catalyzes the hydrolysis of the adenine ring of phosphoribosyl-AMP. This chain is Phosphoribosyl-AMP cyclohydrolase, found in Chelativorans sp. (strain BNC1).